A 203-amino-acid chain; its full sequence is V-type ATP synthase subunit D (203 aa).

It belongs to the V-ATPase D subunit family.

Functionally, produces ATP from ADP in the presence of a proton gradient across the membrane. The polypeptide is V-type ATP synthase subunit D (Thermotoga neapolitana (strain ATCC 49049 / DSM 4359 / NBRC 107923 / NS-E)).